A 184-amino-acid polypeptide reads, in one-letter code: MIFGYARVSTDDQNLSLQIDALTHYGIDKLFQEKVTGAKKDRPQLEEMINLLREGDSVVIYKLDRISRSTKHLIELSELFEELSVNFISIQDNVDTSTSMGRFFFRVMASLAELERDIIIERTNSGLKAARVRGKKGGRPSKGKLSIDLALKMYDSKEYSIRQILDASKLSKTTFYRYLNKRNA.

In terms of domain architecture, Resolvase/invertase-type recombinase catalytic spans 1-134 (MIFGYARVST…SGLKAARVRG (134 aa)). The O-(5'-phospho-DNA)-serine intermediate role is filled by S9. The H-T-H motif DNA-binding region spans 161-180 (IRQILDASKLSKTTFYRYLN).

This sequence belongs to the site-specific recombinase resolvase family.

Functionally, resolvase catalyzes the resolution (a site-specific recombination) of the cointegrated replicon to yield the final transposition products. The sequence is that of Transposon Tn917 resolvase (tnpR) from Enterococcus faecalis (Streptococcus faecalis).